Reading from the N-terminus, the 444-residue chain is Chromosome partition protein MukF (444 aa).

A leucine-zipper region spans residues 212–240 (LDETSGNLRELQDTLNAAGDKLQAQLLRI).

The protein belongs to the MukF family. In terms of assembly, interacts, and probably forms a ternary complex, with MukE and MukB via its C-terminal region. The complex formation is stimulated by calcium or magnesium. It is required for an interaction between MukE and MukB.

The protein localises to the cytoplasm. It localises to the nucleoid. In terms of biological role, involved in chromosome condensation, segregation and cell cycle progression. May participate in facilitating chromosome segregation by condensation DNA from both sides of a centrally located replisome during cell division. Not required for mini-F plasmid partitioning. Probably acts via its interaction with MukB and MukE. Overexpression results in anucleate cells. It has a calcium binding activity. This chain is Chromosome partition protein MukF, found in Haemophilus influenzae (strain PittGG).